The sequence spans 576 residues: Cyclic nucleotide-binding domain-containing protein 2 (576 aa).

116-239 contacts a nucleoside 3',5'-cyclic phosphate; it reads SYRNYAEPLQ…DAQYRFEFFR (124 aa).

Its subcellular location is the cytoplasm. The protein resides in the cytosol. Essential for male fertility. Plays an important role in spermatogenesis and regulates sperm motility by controlling the development of the flagellar bending of sperm. In Homo sapiens (Human), this protein is Cyclic nucleotide-binding domain-containing protein 2 (CNBD2).